The primary structure comprises 1088 residues: DNA mismatch repair protein MutS (1088 aa).

The disordered stretch occupies residues 498 to 579 (PLDGITPPDD…SFEMPSLHGH (82 aa)). Over residues 537–546 (DLFDEEEEQE) the composition is skewed to acidic residues. An ATP-binding site is contributed by 816–823 (GPNMSGKS). The tract at residues 1000 to 1048 (LERRAPRSTPQPAPERTEERPAAGRPTARSHSAARGDPPRAPDGQLSLF) is disordered.

The protein belongs to the DNA mismatch repair MutS family.

Its function is as follows. This protein is involved in the repair of mismatches in DNA. It is possible that it carries out the mismatch recognition step. This protein has a weak ATPase activity. The sequence is that of DNA mismatch repair protein MutS from Roseiflexus castenholzii (strain DSM 13941 / HLO8).